Consider the following 290-residue polypeptide: 4-hydroxybenzoate octaprenyltransferase (290 aa).

The next 8 helical transmembrane spans lie at 23–43 (IGALLLLWPTLWALWVATPGV), 46–66 (LWILAVFVAGVWLMRAAGCVV), 99–119 (LFVVLVLISFLLVLTLNTMTI), 141–161 (LPQVVLGAAFGWSIPMAFAAV), 163–183 (ESVPLSCWLMFLANILWAVAY), 213–233 (LIIGIFQIGVLALMAIIGELN), 234–254 (GLGWGYYWSILVAGALFVYQQ), and 268–288 (AFMNNNYVGLVLFLGLAMSYW).

This sequence belongs to the UbiA prenyltransferase family. Mg(2+) serves as cofactor.

The protein resides in the cell inner membrane. It catalyses the reaction all-trans-octaprenyl diphosphate + 4-hydroxybenzoate = 4-hydroxy-3-(all-trans-octaprenyl)benzoate + diphosphate. It participates in cofactor biosynthesis; ubiquinone biosynthesis. Catalyzes the prenylation of para-hydroxybenzoate (PHB) with an all-trans polyprenyl group. Mediates the second step in the final reaction sequence of ubiquinone-8 (UQ-8) biosynthesis, which is the condensation of the polyisoprenoid side chain with PHB, generating the first membrane-bound Q intermediate 3-octaprenyl-4-hydroxybenzoate. This chain is 4-hydroxybenzoate octaprenyltransferase, found in Escherichia coli (strain UTI89 / UPEC).